A 228-amino-acid polypeptide reads, in one-letter code: Nucleolar protein 12 (228 aa).

Positions 1–22 are disordered; it reads MGKSDRLQQGSKGKGGGKRKHG. A coiled-coil region spans residues 40-103; the sequence is FHKRKLERRR…AITATTECVQ (64 aa). Residues 126–145 show a composition bias toward basic and acidic residues; sequence LLEPAQRDGGDGEERERTEA. Positions 126-228 are disordered; sequence LLEPAQRDGG…QTGRNERSQD (103 aa). The segment covering 158 to 170 has biased composition (polar residues); sequence KIQSLTASLNSLV. Residues 171–180 show a composition bias toward basic residues; it reads KQKKRRKQKR. Basic and acidic residues predominate over residues 181-195; the sequence is RQEAKQRSHQSDRKS. Residues 204–220 are compositionally biased toward basic residues; it reads NKQKQGKSTKRQRRRQT.

Belongs to the RRP17 family.

Its subcellular location is the nucleus. It is found in the nucleolus. In terms of biological role, may bind to rRNA. In Danio rerio (Zebrafish), this protein is Nucleolar protein 12 (nol12).